The following is a 535-amino-acid chain: Glutamyl-tRNA reductase 3, chloroplastic (535 aa).

Cys131 acts as the Nucleophile in catalysis. Residues 131 to 133 (CNR), Ser190, 195 to 197 (EGQ), and Gln201 each bind substrate. 272–277 (GAGKMG) is a binding site for NADP(+).

This sequence belongs to the glutamyl-tRNA reductase family. As to expression, primarily expressed in roots.

It localises to the plastid. The protein resides in the chloroplast. It catalyses the reaction (S)-4-amino-5-oxopentanoate + tRNA(Glu) + NADP(+) = L-glutamyl-tRNA(Glu) + NADPH + H(+). Its pathway is porphyrin-containing compound metabolism; protoporphyrin-IX biosynthesis; 5-aminolevulinate from L-glutamyl-tRNA(Glu): step 1/2. In terms of biological role, catalyzes the NADPH-dependent reduction of glutamyl-tRNA(Glu) to glutamate 1-semialdehyde (GSA). This Hordeum vulgare (Barley) protein is Glutamyl-tRNA reductase 3, chloroplastic (HEMA3).